A 467-amino-acid chain; its full sequence is Glutamate--tRNA ligase (467 aa).

The 'HIGH' region motif lies at 9-19; that stretch reads PSPTGYLHIGG. Residues 237–241 carry the 'KMSKS' region motif; it reads KLSKR. K240 is a binding site for ATP.

It belongs to the class-I aminoacyl-tRNA synthetase family. Glutamate--tRNA ligase type 1 subfamily. As to quaternary structure, monomer.

The protein resides in the cytoplasm. It carries out the reaction tRNA(Glu) + L-glutamate + ATP = L-glutamyl-tRNA(Glu) + AMP + diphosphate. In terms of biological role, catalyzes the attachment of glutamate to tRNA(Glu) in a two-step reaction: glutamate is first activated by ATP to form Glu-AMP and then transferred to the acceptor end of tRNA(Glu). The protein is Glutamate--tRNA ligase of Xylella fastidiosa (strain M23).